Consider the following 551-residue polypeptide: Hedycaryol synthase TPS20CT (551 aa).

Residues Arg-266, Asp-303, Asp-307, Arg-444, and Asp-447 each coordinate (2E,6E)-farnesyl diphosphate. Positions 303 and 307 each coordinate Mg(2+). The DDXXD motif signature appears at 303–307 (DDIYD). 3 residues coordinate Mg(2+): Asp-447, Ser-451, and Glu-455.

Belongs to the terpene synthase family. Tpsb subfamily. Requires Mg(2+) as cofactor. Mn(2+) is required as a cofactor. In terms of tissue distribution, highly expressed in glandular trichomes.

The enzyme catalyses (2E,6E)-farnesyl diphosphate + H2O = (2E,6E)-hedycaryol + diphosphate. The protein operates within secondary metabolite biosynthesis; terpenoid biosynthesis. Functionally, involved in sesquiterpene olefins biosynthesis, constituants of cannabinoids and terpenoids-rich resins. Catalyzes primarily the conversion of (2E)-farnesyl diphosphate to hedycaryol, which is spontaneously converted to elemol as a thermal degradation product. The protein is Hedycaryol synthase TPS20CT of Cannabis sativa (Hemp).